Consider the following 652-residue polypeptide: Na(+)/H(+) antiporter NhaA 1 (652 aa).

The tract at residues 1-427 is na(+)/H(+) antiporter NhaA; sequence MTGELPRGRR…VGASLTTWLV (427 aa). Transmembrane regions (helical) follow at residues 27–47, 78–98, 114–134, 142–162, 173–193, 200–220, 227–247, 312–332, 343–363, 376–396, and 411–431; these read AFLHTETGSARVLLAAAVVAL, LRYWVNSGLMTFFFLVIGLEV, TLPLLAGIGGILVPIAIYLAF, VGWGVVMATDTALALGMLAVL, FLLTVAVVDDLIVIAVLAIAY, TALFVAAGIFALVLLIRAAGG, LLLGVAAWLAVSESGVDPVVV, LIVPLFALANVGVVVDGELLA, VLFAYVVGKPAGIVIASMLVA, WAAIIGVGTVSGIGFTIALLI, and IGILVATVGASLTTWLVFRLA. Positions 428–623 constitute a Thioredoxin domain; that stretch reads FRLAARLPPA…LSAAVTSAFA (196 aa). Positions 626-652 are disordered; sequence RLRPRDDREPDRRREVGSEQPDEEPGT. Residues 628–642 are compositionally biased toward basic and acidic residues; that stretch reads RPRDDREPDRRREVG.

This sequence in the N-terminal section; belongs to the NhaA Na(+)/H(+) (TC 2.A.33) antiporter family.

It is found in the cell membrane. The enzyme catalyses Na(+)(in) + 2 H(+)(out) = Na(+)(out) + 2 H(+)(in). Na(+)/H(+) antiporter that extrudes sodium in exchange for external protons. The chain is Na(+)/H(+) antiporter NhaA 1 from Salinispora arenicola (strain CNS-205).